Reading from the N-terminus, the 91-residue chain is Small ribosomal subunit protein bS20 (91 aa).

It belongs to the bacterial ribosomal protein bS20 family.

Binds directly to 16S ribosomal RNA. This chain is Small ribosomal subunit protein bS20, found in Thermosipho melanesiensis (strain DSM 12029 / CIP 104789 / BI429).